The following is a 31-amino-acid chain: uncharacterized protein (31 aa).

The disordered stretch occupies residues 1–31; that stretch reads MKKLERMSEVSQMCSEAKKNRKRMSVVSSVA.

This is an uncharacterized protein from Sulfolobus islandicus filamentous virus (isolate Iceland/Hveragerdi) (SIFV).